We begin with the raw amino-acid sequence, 319 residues long: D-alanine--D-alanine ligase (319 aa).

The region spanning 120 to 315 is the ATP-grasp domain; the sequence is KRVLAQAGVP…YPELLRRLVE (196 aa). 147–198 provides a ligand contact to ATP; the sequence is DPPFFVKPANTGSSVGISRVERFQDLEAALALAFRYDEKAVVEKALSPVREL. Mg(2+) is bound by residues Asp-270, Glu-282, and Asn-284.

This sequence belongs to the D-alanine--D-alanine ligase family. Mg(2+) is required as a cofactor. Requires Mn(2+) as cofactor.

Its subcellular location is the cytoplasm. It carries out the reaction 2 D-alanine + ATP = D-alanyl-D-alanine + ADP + phosphate + H(+). The protein operates within cell wall biogenesis; peptidoglycan biosynthesis. Cell wall formation. The sequence is that of D-alanine--D-alanine ligase from Thermus thermophilus (strain ATCC BAA-163 / DSM 7039 / HB27).